A 243-amino-acid polypeptide reads, in one-letter code: 1-(5-phosphoribosyl)-5-[(5-phosphoribosylamino)methylideneamino] imidazole-4-carboxamide isomerase (243 aa).

Catalysis depends on Asp-8, which acts as the Proton acceptor. Asp-129 acts as the Proton donor in catalysis.

Belongs to the HisA/HisF family.

It localises to the cytoplasm. It carries out the reaction 1-(5-phospho-beta-D-ribosyl)-5-[(5-phospho-beta-D-ribosylamino)methylideneamino]imidazole-4-carboxamide = 5-[(5-phospho-1-deoxy-D-ribulos-1-ylimino)methylamino]-1-(5-phospho-beta-D-ribosyl)imidazole-4-carboxamide. Its pathway is amino-acid biosynthesis; L-histidine biosynthesis; L-histidine from 5-phospho-alpha-D-ribose 1-diphosphate: step 4/9. The sequence is that of 1-(5-phosphoribosyl)-5-[(5-phosphoribosylamino)methylideneamino] imidazole-4-carboxamide isomerase from Geobacter sp. (strain M21).